We begin with the raw amino-acid sequence, 797 residues long: Striatin-3 (797 aa).

Position 1 is an N-acetylmethionine (M1). Gly residues-rich tracts occupy residues 1 to 13 and 23 to 43; these read MDEL…GGPG and GPGG…GGGP. A disordered region spans residues 1 to 60; the sequence is MDELAGGGGGGPGMAAPPRQQQGPGGNLGLSPGGNGAAGGGGPPASEGAGPAAGPELSRP. Positions 44 to 56 are enriched in low complexity; it reads PASEGAGPAAGPE. Positions 71 to 79 are caveolin-binding; the sequence is YIQHEWARF. The stretch at 77-136 forms a coiled coil; the sequence is ARFEMERAHWEVERAELQARIAFLQGERKGQENLKKDLVRRIKMLEYALKQERAKYHKLK. Phosphothreonine is present on T150. A calmodulin-binding region spans residues 166-183; that stretch reads QNSQLTWKQGRQLLRQYL. Phosphoserine is present on residues S202, S214, and S229. Disordered regions lie at residues 224 to 278 and 313 to 338; these read LNGG…KHRM and DGEG…SPTA. Positions 230 to 241 are enriched in basic and acidic residues; sequence PKQKGQEIKRSS. Positions 253 to 265 are enriched in acidic residues; sequence NADDSDEDEENDM. 2 positions are modified to phosphoserine: S257 and S335. WD repeat units follow at residues 478-517, 531-570, 584-623, 679-718, 721-760, and 767-797; these read SHFD…PAKK, AHIG…VDPY, GHTD…PCIC, QSNN…MIHS, AHLD…CVQE, and KLDE…KVFV.

Belongs to the WD repeat striatin family. As to quaternary structure, tetramerizes. Part of the core of STRIPAK complexes composed of PP2A catalytic and scaffolding subunits, the striatins (PP2A regulatory subunits), the striatin-associated proteins MOB4, STRIP1 and STRIP2, PDCD10 and members of the STE20 kinases, such as STK24 and STK26. The STRIPAK complex can be extended by adapter proteins such as SLMAP:SIKE1 or CTTNBP2NL. Interacts with CDC42BPB.

It is found in the cytoplasm. The protein resides in the membrane. In terms of biological role, calmodulin-binding scaffolding protein which is the center of the striatin-interacting phosphatase and kinase (STRIPAK) complexes. STRIPAK complexes have critical roles in protein (de)phosphorylation and are regulators of multiple signaling pathways including Hippo, MAPK, nuclear receptor and cytoskeleton remodeling. Different types of STRIPAK complexes are involved in a variety of biological processes such as cell growth, differentiation, apoptosis, metabolism and immune regulation. This Homo sapiens (Human) protein is Striatin-3.